The primary structure comprises 394 residues: Phosphoglycerate kinase (394 aa).

Residues 21-23, arginine 36, 59-62, arginine 118, and arginine 151 each bind substrate; these read DFN and HLGR. The residue at position 183 (serine 183) is a Phosphoserine. Lysine 201 lines the ATP pocket. Residue threonine 299 is modified to Phosphothreonine. ATP contacts are provided by residues glutamate 323 and 350–353; that span reads GGDS.

It belongs to the phosphoglycerate kinase family. In terms of assembly, monomer.

It is found in the cytoplasm. It carries out the reaction (2R)-3-phosphoglycerate + ATP = (2R)-3-phospho-glyceroyl phosphate + ADP. Its pathway is carbohydrate degradation; glycolysis; pyruvate from D-glyceraldehyde 3-phosphate: step 2/5. The polypeptide is Phosphoglycerate kinase (Halalkalibacterium halodurans (strain ATCC BAA-125 / DSM 18197 / FERM 7344 / JCM 9153 / C-125) (Bacillus halodurans)).